The following is a 199-amino-acid chain: uncharacterized protein (199 aa).

Transmembrane regions (helical) follow at residues 27–47 (LIKI…PILA), 55–75 (LLTL…VAAL), and 172–192 (LLLL…VLLL).

It localises to the cell membrane. This is an uncharacterized protein from Synechocystis sp. (strain ATCC 27184 / PCC 6803 / Kazusa).